The primary structure comprises 258 residues: Granzyme M (258 aa).

A Peptidase S1 domain is found at 21–250; sequence IIGGREAVPH…YSSWIRKVIG (230 aa). Cysteine 46 and cysteine 62 are disulfide-bonded. Catalysis depends on charge relay system residues histidine 61 and aspartate 107. The tract at residues 122 to 141 is disordered; it reads NVKPLALPRKPRDKPAEGSR. Intrachain disulfides connect cysteine 142–cysteine 210, cysteine 173–cysteine 189, and cysteine 200–cysteine 226. Asparagine 174 is a glycosylation site (N-linked (GlcNAc...) asparagine). Serine 204 (charge relay system) is an active-site residue. Asparagine 225 is a glycosylation site (N-linked (GlcNAc...) asparagine).

This sequence belongs to the peptidase S1 family. Granzyme subfamily.

Its subcellular location is the secreted. The protein resides in the cytoplasmic granule. In terms of biological role, cleaves peptide substrates after methionine, leucine, and norleucine. Physiological substrates include EZR, alpha-tubulins and the apoptosis inhibitor BIRC5/Survivin. Promotes caspase activation and subsequent apoptosis of target cells. This chain is Granzyme M (Gzmm), found in Rattus norvegicus (Rat).